The chain runs to 249 residues: Triosephosphate isomerase (249 aa).

The substrate site is built by N10 and K12. Residue H94 is the Electrophile of the active site. E166 (proton acceptor) is an active-site residue.

This sequence belongs to the triosephosphate isomerase family. As to quaternary structure, homodimer. Post-translationally, the N-terminus is blocked.

It carries out the reaction D-glyceraldehyde 3-phosphate = dihydroxyacetone phosphate. It participates in carbohydrate biosynthesis; gluconeogenesis. The protein operates within carbohydrate degradation; glycolysis; D-glyceraldehyde 3-phosphate from glycerone phosphate: step 1/1. The polypeptide is Triosephosphate isomerase (TPI1) (Paracoccidioides lutzii (strain ATCC MYA-826 / Pb01) (Paracoccidioides brasiliensis)).